Consider the following 707-residue polypeptide: Metal transporter CNNM3 (707 aa).

A helical membrane pass occupies residues 11-27 (LGWLFAALCLGNAAGEA). Asparagine 73 carries an N-linked (GlcNAc...) asparagine glycan. The CNNM transmembrane domain occupies 130–308 (EAAPPWALGL…DPYSDLSKGV (179 aa)). The next 3 helical transmembrane spans lie at 193–213 (CALGALLLLASLAQAALAVLL), 221–241 (AVPAVLGSAGLVFLVGEVVPA), and 261–281 (LAVLLTLPVALPVGQLLELAA). 2 CBS domains span residues 318 to 379 (LTPL…CTPL) and 386 to 452 (YNHP…ILDE). Serine 661 is modified (phosphoserine). Over residues 678 to 691 (LGEKTTTAAGSSHS) the composition is skewed to polar residues. The disordered stretch occupies residues 678–707 (LGEKTTTAAGSSHSRPGVPVEGSPGRNPGV). A Phosphoserine modification is found at serine 700.

This sequence belongs to the ACDP family. As to expression, widely expressed. Expressed at higher level in heart and spleen.

The protein localises to the cell membrane. Its function is as follows. Probable metal transporter. In Homo sapiens (Human), this protein is Metal transporter CNNM3 (CNNM3).